The sequence spans 219 residues: Ribose-5-phosphate isomerase A (219 aa).

Substrate is bound by residues 28 to 31, 81 to 84, and 94 to 97; these read TGST, DGAD, and KGGG. Glu-103 functions as the Proton acceptor in the catalytic mechanism. Lys-121 contacts substrate.

Belongs to the ribose 5-phosphate isomerase family. As to quaternary structure, homodimer.

It catalyses the reaction aldehydo-D-ribose 5-phosphate = D-ribulose 5-phosphate. It participates in carbohydrate degradation; pentose phosphate pathway; D-ribose 5-phosphate from D-ribulose 5-phosphate (non-oxidative stage): step 1/1. Catalyzes the reversible conversion of ribose-5-phosphate to ribulose 5-phosphate. This Shewanella loihica (strain ATCC BAA-1088 / PV-4) protein is Ribose-5-phosphate isomerase A.